The following is a 1377-amino-acid chain: MNRIYSLRYSAVARGFIAVSEFARKCVHKSVRRLCFPVLLLIPVLFSAGSLAGTVNNELGYQLFRDFAENKGMFRPGATNIAIYNKQGEFVGTLDKAAMPDFSAVDSEIGVATLINPQYIASVKHNGGYTNVSFGDGENRYNIVDRNNAPSLDFHAPRLDKLVTEVAPTAVTAQGAVAGAYLDKERYPVFYRLGSGTQYIKDSNGQLTQMGGAYSWLTGGTVGSLSSYQNGEMISTSSGLVFDYKLNGAMPIYGEAGDSGSPLFAFDTVQNKWVLVGVLTAGNGAGGRGNNWAVIPLDFIGQKFNEDNDAPVTFRTSEGGALEWSFNSSTGAGALTQGTTTYAMHGQQGNDLNAGKNLIFQGQNGQINLKDSVSQGAGSLTFRDNYTVTTSNGSTWTGAGIVVDNGVSVNWQVNGVKGDNLHKIGEGTLTVQGTGINEGGLKVGDGKVVLNQQADNKGQVQAFSSVNIASGRPTVVLTDERQVNPDTVSWGYRGGTLDVNGNSLTFHQLKAADYGAVLANNVDKRATITLDYALRADKVALNGWSESGKGTAGNLYKYNNPYTNTTDYFILKQSTYGYFPTDQSSNATWEFVGHSQGDAQKLVADRFNTAGYLFHGQLKGNLNVDNRLPEGVTGALVMDGAADISGTFTQENGRLTLQGHPVIHAYNTQSVADKLAASGDHSVLTQPTSFSQEDWENRSFTFDRLSLKNTDFGLGRNATLNTTIQADNSSVTLGDSRVFIDKNDGQGTAFTLEEGTSVATKDADKSVFNGTVNLDNQSVLNINDIFNGGIQANNSTVNISSDSAVLGNSTLTSTALNLNKGANALASQSFVSDGPVNISDAALSLNSRPDEVSHTLLPVYDYAGSWNLKGDDARLNVGPYSMLSGNINVQDKGTVTLGGEGELSPDLTLQNQMLYSLFNGYRNIWSGSLNAPDATVSMTDTQWSMNGNSTAGNMKLNRTIVGFNGGTSPFTTLTTDNLDAVQSAFVMRTDLNKADKLVINKSATGHDNSIWVNFLKKPSNKDTLDIPLVSAPEATADNLFRASTRVVGFSDVTPILSVRKEDGKKEWVLDGYQVARNDGQGKAAATFMHISYNNFITEVNNLNKRMGDLRDINGEAGTWVRLLNGSGSADGGFTDHYTLLQMGADRKHELGSMDLFTGVMATYTDTDASADLYSGKTKSWGGGFYASGLFRSGAYFDVIAKYIHNENKYDLNFAGAGKQNFRSHSLYAGAEVGYRYHLTDTTFVEPQAELVWGRLQGQTFNWNDSGMDVSMRRNSVNPLVGRTGVVSGKTFSGKDWSLTARAGLHYEFDLTDSADVHLKDAAGEHQINGRKDSRMLYGVGLNARFGDNTRLGLEVERSAFGKYNTDDAINANIRYSF.

The signal sequence occupies residues 1-52; that stretch reads MNRIYSLRYSAVARGFIAVSEFARKCVHKSVRRLCFPVLLLIPVLFSAGSLA. Residues 53 to 302 form the Peptidase S6 domain; that stretch reads GTVNNELGYQ…AVIPLDFIGQ (250 aa). Residues His-125, Asp-153, and Ser-259 each act as charge relay system in the active site. The Autotransporter domain maps to 1111-1377; that stretch reads DINGEAGTWV…AINANIRYSF (267 aa).

The C-terminus is blocked. Post-translationally, cleaved to release the mature protein from the outer membrane.

Its subcellular location is the periplasm. The protein localises to the secreted. It is found in the cell surface. The protein resides in the cell outer membrane. Functionally, contributes to the development of lesions and deposition of fibrin in the avian air sacs. It can act both as an adhesin and as a serine protease. Agglutinates erythrocytes while in contact with the extracellular surface of the bacterial cells. Can adhere to purified hemoglobin and bind with great efficiency to extracellular matrix proteins. Cleaves casein and exhibits mucinolytic activity. The polypeptide is Temperature-sensitive hemagglutinin tsh autotransporter (tsh) (Escherichia coli).